A 924-amino-acid polypeptide reads, in one-letter code: Phosphatidate phosphatase LPIN1 (924 aa).

Residues 1–108 (MNYVGQLAGQ…IPMYLATSPI (108 aa)) form an N-LIP region. S106 and S150 each carry phosphoserine. Disordered regions lie at residues 133–248 (PTTA…DCQR) and 269–297 (FHAS…ADRL). A compositionally biased stretch (basic residues) spans 152-161 (GKKRRKRRRK). The Nuclear localization signal signature appears at 153–158 (KKRRKR). A compositionally biased stretch (basic and acidic residues) spans 162 to 172 (AQLDNLKRDDN). A compositionally biased stretch (acidic residues) spans 176–193 (SEDEDMFPIEMSSDEDTA). Polar residues-rich tracts occupy residues 218 to 229 (PSISTHPQSASY) and 273 to 284 (ESPSGSRPSTPK). Phosphoserine occurs at positions 285, 287, and 293. Over residues 285–297 (SDSELVSKSADRL) the composition is skewed to basic and acidic residues. T298 is subject to Phosphothreonine. 2 disordered regions span residues 314–426 (QAAK…SRHL) and 446–490 (LYFP…STSD). Phosphoserine is present on S328. Residues 343 to 358 (AIHSESSDTFSDQSPT) are compositionally biased toward polar residues. S392 bears the Phosphoserine mark. Positions 404-413 (NTAQSSSKTD) are enriched in polar residues. K459 carries the post-translational modification N6-acetyllysine. Residues 461 to 476 (ASDNGARSANQSPQSV) show a composition bias toward polar residues. Phosphoserine occurs at positions 468, 472, and 483. Residues K599 and K629 each participate in a glycyl lysine isopeptide (Lys-Gly) (interchain with G-Cter in SUMO) cross-link. A disordered region spans residues 627 to 649 (RIKHESSSSDEEHAAAKPSGSSH). A compositionally biased stretch (basic and acidic residues) spans 628-641 (IKHESSSSDEEHAA). K629 carries the post-translational modification N6-acetyllysine. Phosphoserine is present on residues S634 and S635. The interval 658-864 (YKKTLRLTSE…VNPKGELVQE (207 aa)) is C-LIP. Residues 712–716 (DIDGT) carry the DXDXT motif motif. The LXXIL motif motif lies at 723 to 727 (LGHIL). Phosphoserine is present on residues S921 and S923.

Belongs to the lipin family. In terms of assembly, interacts (via LXXIL motif) with PPARA. Interacts with PPARGC1A. Interaction with PPARA and PPARGC1A leads to the formation of a complex that modulates gene transcription. Interacts with MEF2C. Requires Mg(2+) as cofactor. Phosphorylated at multiple sites in response to insulin. Phosphorylation is controlled by the mTOR signaling pathway. Phosphorylation is decreased by epinephrine. Phosphorylation may not directly affect the catalytic activity but may regulate the localization. Dephosphorylated by the CTDNEP1-CNEP1R1 complex. Post-translationally, phosphorylated at multiple sites by mTOR in response to insulin, leading to its inactivation. Phosphorylation does not affect the catalytic activity but regulates the localization. Phosphorylation is decreased by epinephrine. Dephosphorylated by the CTDNEP1-CNEP1R1 complex. Dephosphorylation following mTOR inhibition promotes its activity. In terms of processing, sumoylation is important in brain and is marginal in other tissues. Sumoylation facilitates nuclear localization of isoform 2 in neuronals cells and its transcriptional coactivator activity. Acetylation at Lys-459 and Lys-629 by KAT5 in response to fatty acids promotes translocation to the endoplasmic reticulum and synthesis of diacylglycerol. As to expression, specifically expressed in skeletal muscle. Also expressed prominently in adipose tissue, and testis. Lower expression also detected in kidney, lung, brain and liver. Predominant isoform in the liver. In terms of tissue distribution, predominant isoform in the brain.

The protein resides in the mitochondrion outer membrane. It localises to the cytoplasm. Its subcellular location is the nucleus membrane. It is found in the nucleus. The protein localises to the endoplasmic reticulum membrane. It catalyses the reaction a 1,2-diacyl-sn-glycero-3-phosphate + H2O = a 1,2-diacyl-sn-glycerol + phosphate. The catalysed reaction is 1-octadecanoyl-2-(4Z,7Z,10Z,13Z,16Z,19Z-docosahexaenoyl)-sn-glycero-3-phosphate + H2O = 1-octadecanoyl-2-(4Z,7Z,10Z,13Z,16Z,19Z-docosahexaenoyl)-sn-glycerol + phosphate. The enzyme catalyses 1-octadecanoyl-2-(5Z,8Z,11Z,14Z-eicosatetraenoyl)-sn-glycero-3-phosphate + H2O = 1-octadecanoyl-2-(5Z,8Z,11Z,14Z-eicosatetraenoyl)-sn-glycerol + phosphate. It carries out the reaction 1-octadecanoyl-2-(9Z,12Z-octadecadienoyl)-sn-glycero-3-phosphate + H2O = 1-octadecanoyl-2-(9Z,12Z)-octadecadienoyl-sn-glycerol + phosphate. It catalyses the reaction 1-octadecanoyl-2-(9Z-octadecenoyl)-sn-glycero-3-phosphate + H2O = 1-octadecanoyl-2-(9Z-octadecenoyl)-sn-glycerol + phosphate. The catalysed reaction is 1-hexadecanoyl-2-(4Z,7Z,10Z,13Z,16Z,19Z-docosahexaenoyl)-sn-glycero-3-phosphate + H2O = 1-hexadecanoyl-2-(4Z,7Z,10Z,13Z,16Z,19Z-docosahexaenoyl)-sn-glycerol + phosphate. The enzyme catalyses 1,2-dioctadecanoyl-sn-glycero-3-phosphate + H2O = 1,2-dioctadecanoyl-sn-glycerol + phosphate. It carries out the reaction 1-hexadecanoyl-2-(5Z,8Z,11Z,14Z-eicosatetraenoyl)-sn-glycero-3-phosphate + H2O = 1-hexadecanoyl-2-(5Z,8Z,11Z,14Z-eicosatetraenoyl)-sn-glycerol + phosphate. It catalyses the reaction 1-hexadecanoyl-2-(9Z,12Z-octadecadienoyl)-sn-glycero-3-phosphate + H2O = 1-hexadecanoyl-2-(9Z,12Z-octadecadienoyl)-sn-glycerol + phosphate. The catalysed reaction is 1-hexadecanoyl-2-(9Z-octadecenoyl)-sn-glycero-3-phosphate + H2O = 1-hexadecanoyl-2-(9Z-octadecenoyl)-sn-glycerol + phosphate. The enzyme catalyses 1,2-di-(4Z,7Z,10Z,13Z,16Z,19Z-docosahexaenoyl)-sn-glycero-3-phosphate + H2O = 1,2-di-(4Z,7Z,10Z,13Z,16Z,19Z-docosahexaenoyl)-sn-glycerol + phosphate. It carries out the reaction 1,2-di-(5Z,8Z,11Z,14Z)-eicosatetraenoyl-sn-glycero-3-phosphate + H2O = 1,2-di-(5Z,8Z,11Z,14Z)-eicosatetraenoyl-sn-glycerol + phosphate. It catalyses the reaction 1,2-di-(9Z,12Z-octadecadienoyl)-sn-glycero-3-phosphate + H2O = 1,2-di-(9Z,12Z-octadecadienoyl)-sn-glycerol + phosphate. The catalysed reaction is 1,2-di-(9Z-octadecenoyl)-sn-glycero-3-phosphate + H2O = 1,2-di-(9Z-octadecenoyl)-sn-glycerol + phosphate. The enzyme catalyses 1,2-dihexadecanoyl-sn-glycero-3-phosphate + H2O = 1,2-dihexadecanoyl-sn-glycerol + phosphate. Inhibited by N-ethylmaleimide treatment. Functionally, acts as a magnesium-dependent phosphatidate phosphatase enzyme which catalyzes the conversion of phosphatidic acid to diacylglycerol during triglyceride, phosphatidylcholine and phosphatidylethanolamine biosynthesis and therefore controls the metabolism of fatty acids at different levels. Is involved in adipocyte differentiation. Also acts as nuclear transcriptional coactivator for PPARGC1A/PPARA regulatory pathway to modulate lipid metabolism gene expression. In terms of biological role, recruited at the mitochondrion outer membrane and is involved in mitochondrial fission by converting phosphatidic acid to diacylglycerol. This is Phosphatidate phosphatase LPIN1 (Lpin1) from Mus musculus (Mouse).